The following is a 213-amino-acid chain: Nicolin-1 (213 aa).

As to quaternary structure, part of the neuronal tubulin polyglutamylase complex which contains TPGS1, TPGS2, TTLL1, LRRC49 and NICN1. As to expression, high expression level is found in brain, testis, liver and kidney. Weak expression in spleen, leukocytes, small intestin and colon.

It is found in the nucleus. The chain is Nicolin-1 (Nicn1) from Mus musculus (Mouse).